The sequence spans 83 residues: Mu-conotoxin-like PnMKLT1-014 (83 aa).

The N-terminal stretch at 1–22 (MNLTCMMIVAVLFLTAWTFVMA) is a signal peptide. A propeptide spanning residues 23–50 (DDSNNGLANLFSKSRYEMEDPEPSKLEK) is cleaved from the precursor. 3 disulfide bridges follow: cysteine 54–cysteine 72, cysteine 61–cysteine 77, and cysteine 71–cysteine 82.

It belongs to the conotoxin O1 superfamily. As to expression, expressed by the venom duct.

It localises to the secreted. Functionally, mu-conotoxins block voltage-gated sodium channels (Nav). The sequence is that of Mu-conotoxin-like PnMKLT1-014 from Conus pennaceus (Feathered cone).